The sequence spans 354 residues: Fructose-bisphosphate aldolase (354 aa).

Position 50 (S50) interacts with D-glyceraldehyde 3-phosphate. The active-site Proton donor is D83. Zn(2+) is bound by residues H84, D105, E142, and H198. G199 is a dihydroxyacetone phosphate binding site. Residue H232 coordinates Zn(2+). Residues 233–235 and 275–278 each bind dihydroxyacetone phosphate; these read GSS and NIDT.

It belongs to the class II fructose-bisphosphate aldolase family. It depends on Zn(2+) as a cofactor.

The catalysed reaction is beta-D-fructose 1,6-bisphosphate = D-glyceraldehyde 3-phosphate + dihydroxyacetone phosphate. It participates in carbohydrate degradation; glycolysis; D-glyceraldehyde 3-phosphate and glycerone phosphate from D-glucose: step 4/4. Its function is as follows. Catalyzes the aldol condensation of dihydroxyacetone phosphate (DHAP or glycerone-phosphate) with glyceraldehyde 3-phosphate (G3P) to form fructose 1,6-bisphosphate (FBP) in gluconeogenesis and the reverse reaction in glycolysis. In Pseudomonas aeruginosa (strain ATCC 15692 / DSM 22644 / CIP 104116 / JCM 14847 / LMG 12228 / 1C / PRS 101 / PAO1), this protein is Fructose-bisphosphate aldolase (fba).